A 215-amino-acid polypeptide reads, in one-letter code: Large ribosomal subunit protein uL1 (215 aa).

This sequence belongs to the universal ribosomal protein uL1 family. In terms of assembly, part of the 50S ribosomal subunit.

Functionally, binds directly to 23S rRNA. Probably involved in E site tRNA release. Protein L1 is also a translational repressor protein, it controls the translation of its operon by binding to its mRNA. This chain is Large ribosomal subunit protein uL1, found in Staphylothermus marinus (strain ATCC 43588 / DSM 3639 / JCM 9404 / F1).